The sequence spans 386 residues: Small ribosomal subunit protein mS31 (386 aa).

It belongs to the mitochondrion-specific ribosomal protein mS31 family. Component of the mitochondrial ribosome small subunit (28S) which comprises a 12S rRNA and about 30 distinct proteins.

Its subcellular location is the mitochondrion. This Bos taurus (Bovine) protein is Small ribosomal subunit protein mS31 (MRPS31).